The following is a 337-amino-acid chain: Cytoskeleton protein RodZ (337 aa).

The Cytoplasmic segment spans residues 1 to 111 (MNTEATHDQN…LGKRRKKRDG (111 aa)). Residues 19-71 (LRNAREQLGLSQQAVAERLCLKVSTVRDIEEDKAPADLASTFLRGYIRSYARL) form the HTH cro/C1-type domain. Positions 30–49 (QQAVAERLCLKVSTVRDIEE) form a DNA-binding region, H-T-H motif. Residues 112–132 (WLMTFTWLVLFVVIGLSGAWW) form a helical; Signal-anchor for type II membrane protein membrane-spanning segment. Residues 133–337 (WQDHKAQQEE…TLNAEQSPAQ (205 aa)) lie on the Periplasmic side of the membrane. The span at 145-167 (TMADQSSAELSSNSEQGQSVPLN) shows a compositional bias: polar residues. Positions 145-237 (TMADQSSAEL…ATTTPDGAAP (93 aa)) are disordered. A compositionally biased stretch (low complexity) spans 168–207 (TSTTTDPATTSTPPASVDTTATNTQTPAVTAPAPAVDPQQ). A compositionally biased stretch (polar residues) spans 208 to 218 (NAVVSPSQANV). The segment covering 219-237 (DTAATPAPTATTTPDGAAP) has biased composition (low complexity).

The protein belongs to the RodZ family.

The protein localises to the cell inner membrane. Its function is as follows. Cytoskeletal protein that is involved in cell-shape control through regulation of the length of the long axis. This is Cytoskeleton protein RodZ from Escherichia coli (strain 55989 / EAEC).